A 124-amino-acid polypeptide reads, in one-letter code: MAEITVELVSVERMLWAGQASIVTAQTTEGEIGVLPDHEPLLGQLVENGVVTIQPIDGEKLIAGVSDGFLSVSKEKVTILADFAVWANEVDTASAEADLNSDDELAKAHAEAGLRAVRRSSEGL.

The protein belongs to the ATPase epsilon chain family. As to quaternary structure, F-type ATPases have 2 components, CF(1) - the catalytic core - and CF(0) - the membrane proton channel. CF(1) has five subunits: alpha(3), beta(3), gamma(1), delta(1), epsilon(1). CF(0) has three main subunits: a, b and c.

The protein resides in the cell membrane. Its function is as follows. Produces ATP from ADP in the presence of a proton gradient across the membrane. This is ATP synthase epsilon chain from Corynebacterium glutamicum (strain ATCC 13032 / DSM 20300 / JCM 1318 / BCRC 11384 / CCUG 27702 / LMG 3730 / NBRC 12168 / NCIMB 10025 / NRRL B-2784 / 534).